Reading from the N-terminus, the 227-residue chain is MPAIKDWPEDERPREKLLHRGAEALSDAELLALILRSGDAASGHSALDQGRLLIQQFDTLRQMATATTSELQAIKGIGPAKAAELQAVFELARRFGRNPLRPGDRYTSPQAVFAHFHERLRDHKRERFIALLLDSKNRLLREVGISEGSLTASIVHPRDVFAPVVRESAAAVLFVHNHPSGDPSPSREDLDITQRLREVGELMGVRVLDHIIIGDEGYVSLADRGVL.

The region spanning 105 to 227 (RYTSPQAVFA…YVSLADRGVL (123 aa)) is the MPN domain. Zn(2+) is bound by residues histidine 176, histidine 178, and aspartate 189. The JAMM motif motif lies at 176–189 (HNHPSGDPSPSRED).

Belongs to the UPF0758 family.

The chain is UPF0758 protein Pcar_0065 from Syntrophotalea carbinolica (strain DSM 2380 / NBRC 103641 / GraBd1) (Pelobacter carbinolicus).